A 393-amino-acid chain; its full sequence is tRNA(Met) cytidine acetate ligase (393 aa).

G81, N142, and R167 together coordinate ATP.

It belongs to the TmcAL family.

It is found in the cytoplasm. The enzyme catalyses cytidine(34) in elongator tRNA(Met) + acetate + ATP = N(4)-acetylcytidine(34) in elongator tRNA(Met) + AMP + diphosphate. In terms of biological role, catalyzes the formation of N(4)-acetylcytidine (ac(4)C) at the wobble position of elongator tRNA(Met), using acetate and ATP as substrates. First activates an acetate ion to form acetyladenylate (Ac-AMP) and then transfers the acetyl group to tRNA to form ac(4)C34. The polypeptide is tRNA(Met) cytidine acetate ligase (Bacillus cereus (strain Q1)).